Consider the following 149-residue polypeptide: 3-dehydroquinate dehydratase (149 aa).

Residue Tyr26 is the Proton acceptor of the active site. Residues Asn77, His83, and Asp90 each coordinate substrate. The active-site Proton donor is His103. Substrate-binding positions include Leu104 to Ser105 and Arg114.

It belongs to the type-II 3-dehydroquinase family. Homododecamer.

The enzyme catalyses 3-dehydroquinate = 3-dehydroshikimate + H2O. It participates in metabolic intermediate biosynthesis; chorismate biosynthesis; chorismate from D-erythrose 4-phosphate and phosphoenolpyruvate: step 3/7. Its function is as follows. Catalyzes a trans-dehydration via an enolate intermediate. In Haemophilus influenzae (strain 86-028NP), this protein is 3-dehydroquinate dehydratase.